The following is a 277-amino-acid chain: 2-dehydro-3-deoxyphosphooctonate aldolase (277 aa).

Belongs to the KdsA family.

It localises to the cytoplasm. The enzyme catalyses D-arabinose 5-phosphate + phosphoenolpyruvate + H2O = 3-deoxy-alpha-D-manno-2-octulosonate-8-phosphate + phosphate. The protein operates within carbohydrate biosynthesis; 3-deoxy-D-manno-octulosonate biosynthesis; 3-deoxy-D-manno-octulosonate from D-ribulose 5-phosphate: step 2/3. It functions in the pathway bacterial outer membrane biogenesis; lipopolysaccharide biosynthesis. This chain is 2-dehydro-3-deoxyphosphooctonate aldolase, found in Syntrophotalea carbinolica (strain DSM 2380 / NBRC 103641 / GraBd1) (Pelobacter carbinolicus).